Consider the following 320-residue polypeptide: Serpentine receptor class gamma-17 (320 aa).

6 helical membrane passes run 25–45 (AIYF…ISLL), 80–100 (IFFG…STFF), 155–175 (FIML…QVIA), 192–212 (WASL…FTIV), 237–257 (FTSI…LTFA), and 268–288 (YILQ…IMFL).

It belongs to the nematode receptor-like protein srg family.

The protein localises to the membrane. This Caenorhabditis elegans protein is Serpentine receptor class gamma-17 (srg-17).